We begin with the raw amino-acid sequence, 191 residues long: UPF0149 protein VS_2635 (191 aa).

This sequence belongs to the UPF0149 family.

The chain is UPF0149 protein VS_2635 from Vibrio atlanticus (strain LGP32) (Vibrio splendidus (strain Mel32)).